A 209-amino-acid polypeptide reads, in one-letter code: V-type ATP synthase subunit D (209 aa).

The protein belongs to the V-ATPase D subunit family.

In terms of biological role, produces ATP from ADP in the presence of a proton gradient across the membrane. This Thermoanaerobacter pseudethanolicus (strain ATCC 33223 / 39E) (Clostridium thermohydrosulfuricum) protein is V-type ATP synthase subunit D.